Consider the following 139-residue polypeptide: Self-incompatibility protein S1 (139 aa).

A signal peptide spans 1-19 (MNIFYVIVLLSFFLSKSSG). The N-linked (GlcNAc...) asparagine glycan is linked to N51.

Belongs to the plant self-incompatibility (S1) protein family. In terms of processing, glycosylated (S1b) and unglocosylated (S1a) forms coexist. As to expression, accumulates in the stigma (at protein level).

The protein localises to the secreted. In terms of biological role, exhibits specific pollen self-inhibitory activity thus preventing self-fertilization. This Papaver rhoeas (Common poppy) protein is Self-incompatibility protein S1.